A 502-amino-acid chain; its full sequence is Neuronal acetylcholine receptor subunit alpha-7 (502 aa).

A signal peptide spans 1 to 23 (MGLRALMLWLLAAAGLVRESLQG). Residues 24-233 (EFQRKLYKEL…VTMRRRTLYY (210 aa)) are Extracellular-facing. Positions 42 and 44 each coordinate Ca(2+). Asn-46, Asn-90, and Asn-133 each carry an N-linked (GlcNAc...) asparagine glycan. Cys-150 and Cys-164 form a disulfide bridge. Positions 172 and 210 each coordinate Ca(2+). Cys-212 and Cys-213 form a disulfide bridge. A run of 3 helical transmembrane segments spans residues 234 to 254 (GLNL…VFLL), 262 to 282 (ISLG…VAEI), and 295 to 315 (QYFA…VIVL). Residues 316 to 469 (QYHHHDPDGG…WKFAASVVDR (154 aa)) lie on the Cytoplasmic side of the membrane. A helical membrane pass occupies residues 470 to 490 (LCLMAFSVFTIICTIGILMSA).

This sequence belongs to the ligand-gated ion channel (TC 1.A.9) family. Acetylcholine receptor (TC 1.A.9.1) subfamily. Alpha-7/CHRNA7 sub-subfamily. In terms of assembly, homopentamer. Can also form heteropentamers with CHRNB2, mainly found in basal forebrain cholinergic neurons.

It localises to the postsynaptic cell membrane. It is found in the cell membrane. It carries out the reaction Ca(2+)(in) = Ca(2+)(out). It catalyses the reaction K(+)(in) = K(+)(out). The enzyme catalyses Na(+)(in) = Na(+)(out). The catalysed reaction is choline(out) = choline(in). It carries out the reaction NH4(+)(in) = NH4(+)(out). It catalyses the reaction L-arginine(in) = L-arginine(out). The enzyme catalyses guanidine(out) = guanidine(in). Its activity is regulated as follows. Activated by a myriad of ligands such as acetylcholine, cytisine, nicotine, choline and epibatidine. Activity is modulated by positive allosteric modulators (PAMs), such as flavonoids, with a wide range of chemical diversity, pharmacological sensitivity and efficacy. AChR activity is inhibited by the antagonists alpha-conotoxons RgIA, ImI and ImII, small disulfide-constrained peptides from cone snails. In terms of biological role, component of neuronal acetylcholine receptors (nAChRs) that function as pentameric, ligand-gated cation channels with high calcium permeability among other activities. nAChRs are excitatory neurotrasnmitter receptors formed by a collection of nAChR subunits known to mediate synaptic transmission in the nervous system and the neuromuscular junction. Each nAchR subunit confers differential attributes to channel properties, including activation, deactivation and desensitization kinetics, pH sensitivity, cation permeability, and binding to allosteric modulators. CHRNA7 is an homooligomeric neuronal acetylcholine receptor abundantly expressed in the central nervous system. Characterized by a fast desensitization and high calcium permeability. Also expressed in non-neuronal cells such as immune cells like lymphocytes, monocytes and macrophages. The polypeptide is Neuronal acetylcholine receptor subunit alpha-7 (CHRNA7) (Gallus gallus (Chicken)).